Here is a 374-residue protein sequence, read N- to C-terminus: MMSQNYYQILGVSKTASQADLKKAYLKLAKQYHPDTTDAKDAEKKFKEINAAYDVLKDEQKRAAYDRLGHDAFQNQQSRGGGGNHGGFHPDINDIFGDFFSDFMGGSRRSSRPTSAKVRGSDLKYNLTINLEEAFHGIEKNISFSSAVKCDTCHGSGSEKGETVTTCDACSGVGVTRMQQGFFTIEQACHKCQGNGHIIKKPCKKCHGMGRYHKQRNLSVNIPAGVENGTRIRHTGEGEAGIRGGNSGDLYVDIAIKPHDIYKVDGAHLHCKLPISFVNAALGGEIEVPVIEGGKVKLTIPAGTQNGDQLRLRNKGMSKMRSTIRGDMLTHMHVEVPKNLSKRQRELLEEFKKESINEKENDGSFFNKMKSLWS.

In terms of domain architecture, J spans Asn-5 to Gly-69. The CR-type zinc-finger motif lies at Gly-137–Gln-215. 8 residues coordinate Zn(2+): Cys-150, Cys-153, Cys-167, Cys-170, Cys-189, Cys-192, Cys-203, and Cys-206. CXXCXGXG motif repeat units follow at residues Cys-150–Gly-157, Cys-167–Gly-174, Cys-189–Gly-196, and Cys-203–Gly-210.

The protein belongs to the DnaJ family. Homodimer. The cofactor is Zn(2+).

Its subcellular location is the cytoplasm. Participates actively in the response to hyperosmotic and heat shock by preventing the aggregation of stress-denatured proteins and by disaggregating proteins, also in an autonomous, DnaK-independent fashion. Unfolded proteins bind initially to DnaJ; upon interaction with the DnaJ-bound protein, DnaK hydrolyzes its bound ATP, resulting in the formation of a stable complex. GrpE releases ADP from DnaK; ATP binding to DnaK triggers the release of the substrate protein, thus completing the reaction cycle. Several rounds of ATP-dependent interactions between DnaJ, DnaK and GrpE are required for fully efficient folding. Also involved, together with DnaK and GrpE, in the DNA replication of plasmids through activation of initiation proteins. The sequence is that of Chaperone protein DnaJ from Rickettsia massiliae (strain Mtu5).